Consider the following 69-residue polypeptide: MNRSHQLLSVLAIIFYGVMVVGSMMQFLAYYELTSLPSVRQVSLMLVGICAVVCFYASIVYFVEISSRG.

2 helical membrane-spanning segments follow: residues 7–27 (LLSVLAIIFYGVMVVGSMMQF) and 42–62 (VSLMLVGICAVVCFYASIVYF).

It localises to the host membrane. In Haloarcula hispanica (His1V), this protein is Putative transmembrane protein ORF34.